The primary structure comprises 197 residues: Holliday junction resolvase RecU (197 aa).

Positions 82, 84, 97, and 116 each coordinate Mg(2+).

Belongs to the RecU family. It depends on Mg(2+) as a cofactor.

The protein localises to the cytoplasm. It catalyses the reaction Endonucleolytic cleavage at a junction such as a reciprocal single-stranded crossover between two homologous DNA duplexes (Holliday junction).. Endonuclease that resolves Holliday junction intermediates in genetic recombination. Cleaves mobile four-strand junctions by introducing symmetrical nicks in paired strands. Promotes annealing of linear ssDNA with homologous dsDNA. Required for DNA repair, homologous recombination and chromosome segregation. This chain is Holliday junction resolvase RecU, found in Streptococcus mutans serotype c (strain ATCC 700610 / UA159).